The chain runs to 436 residues: Protein TolB homolog (436 aa).

A signal peptide spans 1–27 (MRHSIRLTAALLLAFIACFSFPLSAMA).

Belongs to the TolB family.

It is found in the periplasm. The sequence is that of Protein TolB homolog from Chlorobium luteolum (strain DSM 273 / BCRC 81028 / 2530) (Pelodictyon luteolum).